The primary structure comprises 875 residues: Translation initiation factor IF-2 (875 aa).

Disordered stretches follow at residues 123-204 (EKEK…EKPK) and 240-278 (ETKE…PVET). Positions 240 to 252 (ETKEEKAELEALR) are enriched in basic and acidic residues. A compositionally biased stretch (basic residues) spans 259–268 (PKKKKKKKKK). Residues 269-278 (KEEEKAPVET) are compositionally biased toward basic and acidic residues. Positions 379-547 (ERPPVVTVMG…NILLVSEILE (169 aa)) constitute a tr-type G domain. Residues 388–395 (GHVDHGKT) form a G1 region. Position 388–395 (388–395 (GHVDHGKT)) interacts with GTP. A G2 region spans residues 413–417 (GITQH). Residues 435-438 (DTPG) form a G3 region. GTP is bound by residues 435-439 (DTPGH) and 489-492 (NKID). The G4 stretch occupies residues 489–492 (NKID). Positions 525-527 (SAK) are G5.

The protein belongs to the TRAFAC class translation factor GTPase superfamily. Classic translation factor GTPase family. IF-2 subfamily.

The protein resides in the cytoplasm. Its function is as follows. One of the essential components for the initiation of protein synthesis. Protects formylmethionyl-tRNA from spontaneous hydrolysis and promotes its binding to the 30S ribosomal subunits. Also involved in the hydrolysis of GTP during the formation of the 70S ribosomal complex. The chain is Translation initiation factor IF-2 from Persephonella marina (strain DSM 14350 / EX-H1).